We begin with the raw amino-acid sequence, 1121 residues long: tRNA (34-2'-O)-methyltransferase regulator WDR6 (1121 aa).

Residue Met-1 is modified to N-acetylmethionine. WD repeat units follow at residues 53–97 (IKRV…VVKI), 105–143 (RELWRSGLWNMSDWIWDARWLEGNIALALGHNSVVLYDP), 147–189 (CILQ…VWYP), 200–238 (APDRRISGHVGIIFSMSYLESKGLLATASEDRSVRIWKV), 247–285 (RVQNIGHCFGHSARVWQVKLLENYLISAGEDCVCLVWSH), 289–327 (ILQAFRGHQGRGIRAIAAHERQAWVITGGDDSGIRLWHL), 335–376 (LGVS…LYDV), 381–422 (WEQL…VVPI), 425–470 (PTAA…ISAA), 476–520 (IFVK…LFPS), 559–598 (PVSTLPSLHGKQGVTSVTCHGGYVYTTGRDGAYYQLFVRD), 604–642 (VLRQKSCRGMNWLAGLRIVPDGSMVILGFHANEFVVWNP), 645–684 (HEKLHIVNCGGGHRSWAFSDTEAAMAFAYLKDGDVMLYRA), 739–785 (LTDI…VWGI), 848–893 (HNRH…LFLL), 901–946 (QLLA…FWDL), 970–1012 (GTPS…VFVL), 1036–1073 (EEYSVPCAHAAHVTGLKILSPSIMVSASIDQRLTFWRL), and 1079–1121 (TFMN…NWYD).

Belongs to the WD repeat WDR6 family. Interacts with FTSJ1; the interaction is direct, and required for 2'-O-methylation of position 34 in substrate tRNAs. Interacts with IRS4. Interacts with STK11/LKB1.

Its subcellular location is the cytoplasm. Its function is as follows. Together with methyltransferase FTSJ1, methylates the 2'-O-ribose of nucleotides at position 34 of the tRNA anticodon loop of substrate tRNAs. Required for the correct positioning of the substrate tRNA for methylation. Required to suppress amino acid starvation-induced autophagy. Enhances the STK11/LKB1-induced cell growth suppression activity. This Pongo abelii (Sumatran orangutan) protein is tRNA (34-2'-O)-methyltransferase regulator WDR6 (WDR6).